Consider the following 2104-residue polypeptide: Phenolphthiocerol synthesis polyketide synthase type I Pks15/1 (2104 aa).

The region spanning 41–464 (TEPVAVVGIG…GTNAHVILEE (424 aa)) is the Ketosynthase family 3 (KS3) domain. Residues Cys-211, His-346, and His-386 each act as for beta-ketoacyl synthase activity in the active site. An acyltransferase region spans residues 571–887 (TAVVFPGQGS…GQLFSTGMSV (317 aa)). Ser-662 acts as the For acyltransferase activity in catalysis. The tract at residues 935–1057 (HALLGAVVER…GMLGVEAASS (123 aa)) is N-terminal hotdog fold. A dehydratase region spans residues 935–1095 (HALLGAVVER…YAYGPGFQGL (161 aa)). Positions 935–1207 (HALLGAVVER…TRAMSAAQLR (273 aa)) constitute a PKS/mFAS DH domain. His-967 acts as the Proton acceptor; for dehydratase activity in catalysis. The tract at residues 1069–1207 (AESVDISDGY…TRAMSAAQLR (139 aa)) is C-terminal hotdog fold. The active-site Proton donor; for dehydratase activity is Asp-1128. Residues 1400 to 1705 (GTLEDLVIEP…QARHIGKVVL (306 aa)) form an enoylreductase region. NADP(+) contacts are provided by residues 1530 to 1547 (VLIH…VQLA) and 1719 to 1734 (TVLI…AVLA). Positions 1718–1899 (ATVLITGATG…SVAWGLWEQS (182 aa)) are beta-ketoacyl reductase (KR). A Carrier domain is found at 2004–2079 (DALVGLVCLQ…AIAEYVGRQI (76 aa)). O-(pantetheine 4'-phosphoryl)serine is present on Ser-2039. The interval 2081 to 2104 (DSQATQAEEEKLPESDGEMVSVTA) is disordered.

Belongs to the thiolase-like superfamily. Beta-ketoacyl-ACP synthases family. It depends on pantetheine 4'-phosphate as a cofactor.

It catalyses the reaction a fatty acyl-[ACP] + malonyl-[ACP] + H(+) = a 3-oxoacyl-[ACP] + holo-[ACP] + CO2. It participates in lipid metabolism; fatty acid biosynthesis. Its function is as follows. Catalyzes the elongation by iterative transfer of p-hydroxybenzoyl group from FadD22 (pHBA-S-FAdD22) to form p-hydroxyphenylalkanoate (pHPA) intermediates during phenolphthiocerol (PPOL) biosynthesis. PPOL is an important intermediate in the biosynthesis of phenolic glycolipid (mycosid B). The sequence is that of Phenolphthiocerol synthesis polyketide synthase type I Pks15/1 (pks15/1) from Mycobacterium marinum (strain ATCC BAA-535 / M).